The sequence spans 175 residues: Adenine phosphoribosyltransferase (175 aa).

This sequence belongs to the purine/pyrimidine phosphoribosyltransferase family. As to quaternary structure, homodimer.

Its subcellular location is the cytoplasm. It carries out the reaction AMP + diphosphate = 5-phospho-alpha-D-ribose 1-diphosphate + adenine. Its pathway is purine metabolism; AMP biosynthesis via salvage pathway; AMP from adenine: step 1/1. In terms of biological role, catalyzes a salvage reaction resulting in the formation of AMP, that is energically less costly than de novo synthesis. This Oenococcus oeni (strain ATCC BAA-331 / PSU-1) protein is Adenine phosphoribosyltransferase.